Here is a 365-residue protein sequence, read N- to C-terminus: Flagellar P-ring protein (365 aa).

The signal sequence occupies residues 1 to 19 (MFKALAGIVLALVATLAHA).

The protein belongs to the FlgI family. In terms of assembly, the basal body constitutes a major portion of the flagellar organelle and consists of four rings (L,P,S, and M) mounted on a central rod.

It localises to the periplasm. The protein localises to the bacterial flagellum basal body. Functionally, assembles around the rod to form the L-ring and probably protects the motor/basal body from shearing forces during rotation. This chain is Flagellar P-ring protein, found in Salmonella heidelberg (strain SL476).